Consider the following 36-residue polypeptide: Conotoxin Bu21 (36 aa).

The propeptide occupies 1–21 (DGANAEATDNKPGVFERDEKK). 2 cysteine pairs are disulfide-bonded: cysteine 22/cysteine 28 and cysteine 23/cysteine 34.

The protein belongs to the conotoxin A superfamily. Expressed by the venom duct.

It is found in the secreted. The polypeptide is Conotoxin Bu21 (Conus bullatus (Bubble cone)).